The primary structure comprises 49 residues: Large ribosomal subunit protein bL33A (49 aa).

The protein belongs to the bacterial ribosomal protein bL33 family.

This is Large ribosomal subunit protein bL33A from Bacillus cytotoxicus (strain DSM 22905 / CIP 110041 / 391-98 / NVH 391-98).